Here is a 174-residue protein sequence, read N- to C-terminus: Co-chaperone protein HscB homolog (174 aa).

Residues 2–74 (NYFNLFNFTP…LRRAEHLLSL (73 aa)) enclose the J domain.

It belongs to the HscB family. As to quaternary structure, interacts with HscA and stimulates its ATPase activity.

Functionally, co-chaperone involved in the maturation of iron-sulfur cluster-containing proteins. Seems to help targeting proteins to be folded toward HscA. The protein is Co-chaperone protein HscB homolog of Shewanella denitrificans (strain OS217 / ATCC BAA-1090 / DSM 15013).